Here is a 130-residue protein sequence, read N- to C-terminus: Small ribosomal subunit protein uS9 (130 aa).

It belongs to the universal ribosomal protein uS9 family.

The polypeptide is Small ribosomal subunit protein uS9 (Bacillus cytotoxicus (strain DSM 22905 / CIP 110041 / 391-98 / NVH 391-98)).